The following is a 345-amino-acid chain: Guanine nucleotide-binding protein G(i) subunit alpha-3 (345 aa).

The region spanning 23–345 is the G-alpha domain; the sequence is KEVKLLLLGA…KSNLMECGLY (323 aa). The interval 26–39 is G1 motif; it reads KLLLLGAGESGKST. Positions 33, 34, 35, 36, 37, 38, 39, 141, 142, 166, 167, 168, 169, 170, 171, 172, 192, 194, 260, 261, 263, 264, 316, 317, and 318 each coordinate GTP. S38 contributes to the Mg(2+) binding site. Residues 164 to 172 form a G2 motif region; the sequence is DVLRTRVKT. T172 serves as a coordination point for Mg(2+). A G3 motif region spans residues 187-196; sequence FKMFDVGGQR. Residues 256–263 are G4 motif; it reads ILFLNKKD. Residues 315 to 320 are G5 motif; sequence TCATDT.

The protein belongs to the G-alpha family. G(i/o/t/z) subfamily. As to quaternary structure, heterotrimeric G proteins are composed of 3 units; alpha, beta and gamma. The alpha subunit contains the guanine nucleotide binding site. GTP binding causes dissociation of the heterotrimer, liberating the individual subunits so that they can interact with downstream effector proteins.

The protein localises to the cytoplasm. The protein resides in the cell membrane. Its subcellular location is the cytoskeleton. It is found in the microtubule organizing center. It localises to the centrosome. The protein localises to the membrane. In terms of biological role, heterotrimeric guanine nucleotide-binding proteins (G proteins) function as transducers downstream of G protein-coupled receptors (GPCRs) in numerous signaling cascades. The alpha chain contains the guanine nucleotide binding site and alternates between an active, GTP-bound state and an inactive, GDP-bound state. Signaling by an activated GPCR promotes GDP release and GTP binding. The alpha subunit has a low GTPase activity that converts bound GTP to GDP, thereby terminating the signal. Both GDP release and GTP hydrolysis are modulated by numerous regulatory proteins. Signaling is mediated via effector proteins, such as adenylate cyclase. Inhibits adenylate cyclase activity, leading to decreased intracellular cAMP levels. Stimulates the activity of receptor-regulated K(+) channels. The active GTP-bound form prevents the association of RGS14 with centrosomes and is required for the translocation of RGS14 from the cytoplasm to the plasma membrane. May play a role in cell division. The active GTP-bound form activates the calcium permeant TRPC5 ion channels. The sequence is that of Guanine nucleotide-binding protein G(i) subunit alpha-3 (gnai3) from Xenopus laevis (African clawed frog).